Reading from the N-terminus, the 111-residue chain is Holo-[acyl-carrier-protein] synthase (111 aa).

Residues Asp8 and Glu57 each coordinate Mg(2+).

It belongs to the P-Pant transferase superfamily. AcpS family. Requires Mg(2+) as cofactor.

Its subcellular location is the cytoplasm. It catalyses the reaction apo-[ACP] + CoA = holo-[ACP] + adenosine 3',5'-bisphosphate + H(+). In terms of biological role, transfers the 4'-phosphopantetheine moiety from coenzyme A to a Ser of acyl-carrier-protein. This chain is Holo-[acyl-carrier-protein] synthase, found in Mycoplasmoides gallisepticum (strain R(low / passage 15 / clone 2)) (Mycoplasma gallisepticum).